Here is a 333-residue protein sequence, read N- to C-terminus: GTP 3',8-cyclase (333 aa).

Residues 7–221 (KFGRVHDYIR…FEACDAIGFE (215 aa)) enclose the Radical SAM core domain. Arg16 lines the GTP pocket. [4Fe-4S] cluster is bound by residues Cys23 and Cys27. Tyr29 provides a ligand contact to S-adenosyl-L-methionine. Cys30 is a binding site for [4Fe-4S] cluster. Arg66 contributes to the GTP binding site. S-adenosyl-L-methionine is bound at residue Gly70. Thr97 contributes to the GTP binding site. Residue Ser121 coordinates S-adenosyl-L-methionine. GTP is bound at residue Lys158. Met192 contributes to the S-adenosyl-L-methionine binding site. The [4Fe-4S] cluster site is built by Cys257 and Cys260. Residue 262–264 (RLR) coordinates GTP. Cys274 lines the [4Fe-4S] cluster pocket.

Belongs to the radical SAM superfamily. MoaA family. Monomer and homodimer. [4Fe-4S] cluster serves as cofactor.

It catalyses the reaction GTP + AH2 + S-adenosyl-L-methionine = (8S)-3',8-cyclo-7,8-dihydroguanosine 5'-triphosphate + 5'-deoxyadenosine + L-methionine + A + H(+). The protein operates within cofactor biosynthesis; molybdopterin biosynthesis. Catalyzes the cyclization of GTP to (8S)-3',8-cyclo-7,8-dihydroguanosine 5'-triphosphate. The sequence is that of GTP 3',8-cyclase from Listeria welshimeri serovar 6b (strain ATCC 35897 / DSM 20650 / CCUG 15529 / CIP 8149 / NCTC 11857 / SLCC 5334 / V8).